The sequence spans 748 residues: Catalase-peroxidase (748 aa).

The segment covering 1–16 (MSSDTSASRPPQPDTR) has biased composition (polar residues). The disordered stretch occupies residues 1–43 (MSSDTSASRPPQPDTRTASKSESENPAIPSPHPKSNAPLTNRD). A cross-link (tryptophyl-tyrosyl-methioninium (Trp-Tyr) (with M-264)) is located at residues 113-238 (WHAAGTYRIH…YGATTMGLIY (126 aa)). Histidine 114 acts as the Proton acceptor in catalysis. Positions 238–264 (YVNPEGPEGKPDPIAAAIDIRETFGRM) form a cross-link, tryptophyl-tyrosyl-methioninium (Tyr-Met) (with W-113). Histidine 279 serves as a coordination point for heme b.

This sequence belongs to the peroxidase family. Peroxidase/catalase subfamily. Homodimer or homotetramer. Heme b is required as a cofactor. Formation of the three residue Trp-Tyr-Met cross-link is important for the catalase, but not the peroxidase activity of the enzyme.

The enzyme catalyses H2O2 + AH2 = A + 2 H2O. It catalyses the reaction 2 H2O2 = O2 + 2 H2O. Bifunctional enzyme with both catalase and broad-spectrum peroxidase activity. The protein is Catalase-peroxidase of Mycolicibacterium paratuberculosis (strain ATCC BAA-968 / K-10) (Mycobacterium paratuberculosis).